A 62-amino-acid polypeptide reads, in one-letter code: UPF0370 protein plu2724 (62 aa).

A helical transmembrane segment spans residues 3 to 23 (WLADYWWIILILLVGVLLNAI). The segment at 36-62 (DNKPELPPHRDLNSKWDDEDDWPQKKP) is disordered.

It belongs to the UPF0370 family.

It is found in the cell membrane. This Photorhabdus laumondii subsp. laumondii (strain DSM 15139 / CIP 105565 / TT01) (Photorhabdus luminescens subsp. laumondii) protein is UPF0370 protein plu2724.